A 412-amino-acid chain; its full sequence is AA9 family lytic polysaccharide monooxygenase A (412 aa).

Residues 1-20 form the signal peptide; it reads MKTTTYSLLALAAASKLASA. Positions 21 and 103 each coordinate Cu(2+). A disulfide bridge connects residues C63 and C186. N151 carries N-linked (GlcNAc...) asparagine glycosylation. An O2-binding site is contributed by H172. A Cu(2+)-binding site is contributed by Y183. N-linked (GlcNAc...) asparagine glycosylation is found at N334 and N385. The CBM1 domain maps to 373-409; the sequence is GVAKMYERCGGINHTGPTTCESGSVCKKWNPYYYQCV.

It belongs to the polysaccharide monooxygenase AA9 family. The cofactor is Cu(2+).

It localises to the secreted. It carries out the reaction [(1-&gt;4)-beta-D-glucosyl]n+m + reduced acceptor + O2 = 4-dehydro-beta-D-glucosyl-[(1-&gt;4)-beta-D-glucosyl]n-1 + [(1-&gt;4)-beta-D-glucosyl]m + acceptor + H2O.. Functionally, lytic polysaccharide monooxygenase (LPMO) that depolymerizes crystalline and amorphous polysaccharides via the oxidation of scissile alpha- or beta-(1-4)-glycosidic bonds, yielding C4 oxidation products. Catalysis by LPMOs requires the reduction of the active-site copper from Cu(II) to Cu(I) by a reducing agent and H(2)O(2) or O(2) as a cosubstrate. This Aspergillus niger (strain ATCC MYA-4892 / CBS 513.88 / FGSC A1513) protein is AA9 family lytic polysaccharide monooxygenase A (eglD).